The following is a 268-amino-acid chain: Tryptophan synthase alpha chain (268 aa).

Catalysis depends on proton acceptor residues glutamate 49 and aspartate 60.

It belongs to the TrpA family. As to quaternary structure, tetramer of two alpha and two beta chains.

The enzyme catalyses (1S,2R)-1-C-(indol-3-yl)glycerol 3-phosphate + L-serine = D-glyceraldehyde 3-phosphate + L-tryptophan + H2O. It functions in the pathway amino-acid biosynthesis; L-tryptophan biosynthesis; L-tryptophan from chorismate: step 5/5. The alpha subunit is responsible for the aldol cleavage of indoleglycerol phosphate to indole and glyceraldehyde 3-phosphate. This chain is Tryptophan synthase alpha chain, found in Vibrio cholerae serotype O1 (strain ATCC 39541 / Classical Ogawa 395 / O395).